Consider the following 136-residue polypeptide: MSATHHKTPLPQGVRLGTVMRIRGVVPDQAGRFHVNLLCGEEQEADAALHFNPRLDTSEVVFNTKQQGKWGREERGTGIPFQRGQPFEVLIITTEEGFKTVIGDDEYLHFHHRMPSSNVRSVEVGGDVQLHSVKIF.

The Galectin domain occupies 6–136 (HKTPLPQGVR…DVQLHSVKIF (131 aa)). Position 70–76 (70–76 (WGREERG)) interacts with a beta-D-galactoside.

Monomer.

It localises to the cytoplasm. The protein resides in the nucleus. Its subcellular location is the secreted. Its function is as follows. Could be involved in cell-cell and/or cell-matrix interactions necessary for normal growth control. Pro-apoptotic protein that functions intracellularly upstream of JNK activation and cytochrome c release. The chain is Galectin-7 (Lgals7) from Rattus norvegicus (Rat).